Here is a 141-residue protein sequence, read N- to C-terminus: Hemoglobin subunit alpha-D (141 aa).

In terms of domain architecture, Globin spans 1 to 141 (MLNAEDKKLI…VSAVLAEKYR (141 aa)). Residues His-58 and His-87 each contribute to the heme b site.

It belongs to the globin family. In terms of assembly, heterotetramer of two alpha-D chains and two beta chains. In terms of tissue distribution, red blood cells.

Involved in oxygen transport from the lung to the various peripheral tissues. This chain is Hemoglobin subunit alpha-D (HBAD), found in Phasianus colchicus colchicus (Black-necked pheasant).